Reading from the N-terminus, the 504-residue chain is Apolipoprotein N-acyltransferase (504 aa).

Helical transmembrane passes span 6–26 (LALT…YALV), 47–67 (ALYG…WVFV), 83–103 (LTAL…WLGV), 105–125 (AGGG…WVVT), 153–173 (IAPV…AGLL), and 186–206 (FALL…KVQW). Positions 219–457 (LQGNVPQDQK…REALTGMMQP (239 aa)) constitute a CN hydrolase domain. E258 (proton acceptor) is an active-site residue. Residue K317 is part of the active site. Catalysis depends on C369, which acts as the Nucleophile. The helical transmembrane segment at 465 to 485 (ALWGDWPAIGLCAGIVGICFA) threads the bilayer.

Belongs to the CN hydrolase family. Apolipoprotein N-acyltransferase subfamily.

It is found in the cell inner membrane. The enzyme catalyses N-terminal S-1,2-diacyl-sn-glyceryl-L-cysteinyl-[lipoprotein] + a glycerophospholipid = N-acyl-S-1,2-diacyl-sn-glyceryl-L-cysteinyl-[lipoprotein] + a 2-acyl-sn-glycero-3-phospholipid + H(+). It functions in the pathway protein modification; lipoprotein biosynthesis (N-acyl transfer). In terms of biological role, catalyzes the phospholipid dependent N-acylation of the N-terminal cysteine of apolipoprotein, the last step in lipoprotein maturation. This Methylococcus capsulatus (strain ATCC 33009 / NCIMB 11132 / Bath) protein is Apolipoprotein N-acyltransferase.